The sequence spans 249 residues: Uridylate kinase (249 aa).

19–22 (KLSG) provides a ligand contact to ATP. Residue Gly-61 coordinates UMP. Residues Gly-62 and Arg-66 each contribute to the ATP site. UMP contacts are provided by residues Asp-81 and 142-149 (TGNPYFTT). 3 residues coordinate ATP: Thr-169, Tyr-175, and Asp-178.

The protein belongs to the UMP kinase family. In terms of assembly, homohexamer.

The protein localises to the cytoplasm. It carries out the reaction UMP + ATP = UDP + ADP. Its pathway is pyrimidine metabolism; CTP biosynthesis via de novo pathway; UDP from UMP (UMPK route): step 1/1. With respect to regulation, inhibited by UTP. Catalyzes the reversible phosphorylation of UMP to UDP. The sequence is that of Uridylate kinase from Anaeromyxobacter sp. (strain Fw109-5).